The primary structure comprises 322 residues: SUMO-activating enzyme subunit 1A (322 aa).

Methionine 1 is modified (N-acetylmethionine).

Belongs to the ubiquitin-activating E1 family. In terms of assembly, heterodimer of SAE1A or SAE1B and SAE2. The complex binds SUMO proteins via SAE2.

Its subcellular location is the nucleus. The protein operates within protein modification; protein sumoylation. Functionally, the dimeric enzyme acts as an E1 ligase for SUMO1 and SUMO2. It mediates ATP-dependent activation of SUMO proteins and formation of a thioester with a conserved cysteine residue on SAE2. Functionally redundant with its paralog SAE1B. The chain is SUMO-activating enzyme subunit 1A (SAE1A) from Arabidopsis thaliana (Mouse-ear cress).